The sequence spans 54 residues: Protein GndA (54 aa).

A helical transmembrane segment spans residues 28-50 (LFVVIVSFQQRALTSSVPVFLAV).

It localises to the cell inner membrane. The protein is Protein GndA of Escherichia coli (strain K12).